The sequence spans 111 residues: Ig kappa chain V-III region CBPC 101 (111 aa).

A framework-1 region spans residues 1-23; the sequence is DIVLTQSPASLAVSLGQRATISC. An intrachain disulfide couples Cys-23 to Cys-92. Residues 24–38 form a complementarity-determining-1 region; it reads KASQSVDYTGESYMN. Residues 39-53 are framework-2; the sequence is WYQQNPGQSPKLLIY. The tract at residues 54–60 is complementarity-determining-2; the sequence is AASNLES. The framework-3 stretch occupies residues 61–92; it reads GIPARFSGSGSGTDFTLNIHPVEEEDAATYYC. Residues 93–101 form a complementarity-determining-3 region; the sequence is QQSNEDPYT. The interval 102–111 is framework-4; it reads FGGGTKLEIK.

The sequence is that of Ig kappa chain V-III region CBPC 101 from Mus musculus (Mouse).